A 345-amino-acid polypeptide reads, in one-letter code: Phosphate acyltransferase (345 aa).

This sequence belongs to the PlsX family. As to quaternary structure, homodimer. Probably interacts with PlsY.

The protein resides in the cytoplasm. The enzyme catalyses a fatty acyl-[ACP] + phosphate = an acyl phosphate + holo-[ACP]. It participates in lipid metabolism; phospholipid metabolism. Functionally, catalyzes the reversible formation of acyl-phosphate (acyl-PO(4)) from acyl-[acyl-carrier-protein] (acyl-ACP). This enzyme utilizes acyl-ACP as fatty acyl donor, but not acyl-CoA. This chain is Phosphate acyltransferase, found in Trichlorobacter lovleyi (strain ATCC BAA-1151 / DSM 17278 / SZ) (Geobacter lovleyi).